The sequence spans 219 residues: MPVFYTPIPQNLRVGLANVSGSVFINNRTRDSADFKDHYLENEACAEVSSHLPLQMMLYFNMFFFPFWWISELLMLQLKFSYLPVYYQCLLVTGMVLISIFEVLRMYLGYAGNLKEKVPELAGFWLISFLFQLPILLFFITDPDIIILPLERAVHSLYLAFLLGELMASFLALRVMTRKLAQQFHMRQFGHVQGLHTAEALPMFGLPYGGRSVLPVQDI.

N-linked (GlcNAc...) asparagine glycosylation is found at N18 and N27. The next 4 membrane-spanning stretches (helical) occupy residues 56-76 (MMLYFNMFFFPFWWISELLML), 83-103 (LPVYYQCLLVTGMVLISIFEV), 121-141 (LAGFWLISFLFQLPILLFFIT), and 153-173 (AVHSLYLAFLLGELMASFLAL).

The protein belongs to the TMEM17 family. In terms of assembly, part of the tectonic-like complex (also named B9 complex).

It localises to the cell projection. It is found in the cilium membrane. Transmembrane component of the tectonic-like complex, a complex localized at the transition zone of primary cilia and acting as a barrier that prevents diffusion of transmembrane proteins between the cilia and plasma membranes. Required for ciliogenesis and sonic hedgehog/SHH signaling. In Danio rerio (Zebrafish), this protein is Transmembrane protein 17A (tmem17a).